We begin with the raw amino-acid sequence, 116 residues long: Large ribosomal subunit protein uL18 (116 aa).

This sequence belongs to the universal ribosomal protein uL18 family. Part of the 50S ribosomal subunit; part of the 5S rRNA/L5/L18/L25 subcomplex. Contacts the 5S and 23S rRNAs.

This is one of the proteins that bind and probably mediate the attachment of the 5S RNA into the large ribosomal subunit, where it forms part of the central protuberance. This is Large ribosomal subunit protein uL18 from Acholeplasma laidlawii (strain PG-8A).